A 289-amino-acid polypeptide reads, in one-letter code: Serine/threonine-protein phosphatase Pgam5, mitochondrial (289 aa).

Belongs to the phosphoglycerate mutase family. BPG-dependent PGAM subfamily. As to quaternary structure, interacts with Pk92B/ASK1.

The protein localises to the mitochondrion outer membrane. It carries out the reaction O-phospho-L-seryl-[protein] + H2O = L-seryl-[protein] + phosphate. The catalysed reaction is O-phospho-L-threonyl-[protein] + H2O = L-threonyl-[protein] + phosphate. In terms of biological role, displays phosphatase activity for serine/threonine residues, and dephosphorylates and activates Pk92B kinase. Has apparently no phosphoglycerate mutase activity. This Drosophila mojavensis (Fruit fly) protein is Serine/threonine-protein phosphatase Pgam5, mitochondrial.